Consider the following 349-residue polypeptide: KH domain-containing, RNA-binding, signal transduction-associated protein 2 (349 aa).

One can recognise a KH domain in the interval 65-135 (LIPVKQYPKF…HLSDELHVLI (71 aa)). Disordered regions lie at residues 182 to 284 (EDSG…DDQT) and 319 to 349 (PEEWATTRSSLKAPPQRSARGGYREHPYGRY). Omega-N-methylarginine is present on residues Arg-230 and Arg-240. The span at 340–349 (GYREHPYGRY) shows a compositional bias: basic and acidic residues.

The protein belongs to the KHDRBS family. In terms of assembly, self-associates to form homooligomers. Interacts with KHDRBS1/SAM68; heterooligomer formation of KHDRBS family proteins may modulate RNA substrate specificity. Interacts with RBMX. Interacts with SAFB, SFRS9 and YTHDC1. Interacts with FYN and PLCG1 (via SH3 domain). Interacts (phosphorylated) with FYN, GRB2, PLCG1 and RASA1 (via SH2 domain). Post-translationally, methylated. Tyrosine phosphorylated by FYN, PTK6 and SRC. Tyrosine phosphorylated by SRC during mitosis. Highly expressed in brain, lung, kidney and small intestine. Weakly expressed in placenta, liver, spleen, thymus, ovary and colon.

Its subcellular location is the nucleus. In terms of biological role, RNA-binding protein that plays a role in the regulation of alternative splicing and influences mRNA splice site selection and exon inclusion. Binds both poly(A) and poly(U) homopolymers. Phosphorylation by PTK6 inhibits its RNA-binding ability. Induces an increased concentration-dependent incorporation of exon in CD44 pre-mRNA by direct binding to purine-rich exonic enhancer. Can regulate alternative splicing of NRXN1 in the laminin G-like domain 6 containing the evolutionary conserved neurexin alternative spliced segment 4 (AS4) involved in neurexin selective targeting to postsynaptic partners. Regulates cell-type specific alternative splicing of NRXN1 at AS4 and acts synergystically with SAM68 in exon skipping. In contrast acts antagonistically with SAM68 in NRXN3 exon skipping at AS4. Its phosphorylation by FYN inhibits its ability to regulate splice site selection. May function as an adapter protein for Src kinases during mitosis. The protein is KH domain-containing, RNA-binding, signal transduction-associated protein 2 (KHDRBS2) of Homo sapiens (Human).